The following is a 291-amino-acid chain: Lipoyl synthase (291 aa).

7 residues coordinate [4Fe-4S] cluster: Cys43, Cys48, Cys54, Cys69, Cys73, Cys76, and Ser280. The region spanning 55–269 (FSSRTATFLI…AAYGRARGIP (215 aa)) is the Radical SAM core domain.

It belongs to the radical SAM superfamily. Lipoyl synthase family. It depends on [4Fe-4S] cluster as a cofactor.

Its subcellular location is the cytoplasm. The enzyme catalyses [[Fe-S] cluster scaffold protein carrying a second [4Fe-4S](2+) cluster] + N(6)-octanoyl-L-lysyl-[protein] + 2 oxidized [2Fe-2S]-[ferredoxin] + 2 S-adenosyl-L-methionine + 4 H(+) = [[Fe-S] cluster scaffold protein] + N(6)-[(R)-dihydrolipoyl]-L-lysyl-[protein] + 4 Fe(3+) + 2 hydrogen sulfide + 2 5'-deoxyadenosine + 2 L-methionine + 2 reduced [2Fe-2S]-[ferredoxin]. It participates in protein modification; protein lipoylation via endogenous pathway; protein N(6)-(lipoyl)lysine from octanoyl-[acyl-carrier-protein]: step 2/2. Functionally, catalyzes the radical-mediated insertion of two sulfur atoms into the C-6 and C-8 positions of the octanoyl moiety bound to the lipoyl domains of lipoate-dependent enzymes, thereby converting the octanoylated domains into lipoylated derivatives. The polypeptide is Lipoyl synthase (Oleidesulfovibrio alaskensis (strain ATCC BAA-1058 / DSM 17464 / G20) (Desulfovibrio alaskensis)).